The sequence spans 385 residues: Leucine aminopeptidase 1 (385 aa).

Residues 1 to 19 (MKFPSFLSLGIAASTTALA) form the signal peptide. The propeptide occupies 20-87 (ALPDQKPIGD…FPRAFAKTAV (68 aa)). Residue Asn177 is glycosylated (N-linked (GlcNAc...) asparagine). His185 and Asp204 together coordinate Zn(2+). N-linked (GlcNAc...) asparagine glycosylation occurs at Asn229. The Zn(2+) site is built by Glu243 and Asp270. Cysteines 319 and 323 form a disulfide. Position 352 (His352) interacts with Zn(2+).

This sequence belongs to the peptidase M28 family. M28E subfamily. As to quaternary structure, monomer. It depends on Zn(2+) as a cofactor.

The protein resides in the secreted. In terms of biological role, extracellular aminopeptidase that allows assimilation of proteinaceous substrates. This is Leucine aminopeptidase 1 (LAP1) from Blastomyces gilchristii (strain SLH14081) (Blastomyces dermatitidis).